A 1106-amino-acid polypeptide reads, in one-letter code: Protein translocase subunit SecA (1106 aa).

ATP is bound by residues glutamine 175, glycine 193–threonine 197, and aspartate 694. Residues glutamine 1021 to alanine 1106 are disordered. Over residues glutamine 1042–leucine 1056 the composition is skewed to basic and acidic residues. Positions serine 1057–glutamine 1067 are enriched in polar residues. A compositionally biased stretch (basic and acidic residues) spans aspartate 1068–glycine 1085. The Zn(2+) site is built by cysteine 1090, cysteine 1092, cysteine 1101, and histidine 1102.

This sequence belongs to the SecA family. As to quaternary structure, monomer and homodimer. Part of the essential Sec protein translocation apparatus which comprises SecA, SecYEG and auxiliary proteins SecDF. Other proteins may also be involved. Requires Zn(2+) as cofactor.

The protein localises to the cell inner membrane. It is found in the cytoplasm. It carries out the reaction ATP + H2O + cellular proteinSide 1 = ADP + phosphate + cellular proteinSide 2.. Part of the Sec protein translocase complex. Interacts with the SecYEG preprotein conducting channel. Has a central role in coupling the hydrolysis of ATP to the transfer of proteins into and across the cell membrane, serving as an ATP-driven molecular motor driving the stepwise translocation of polypeptide chains across the membrane. The protein is Protein translocase subunit SecA of Bacteroides thetaiotaomicron (strain ATCC 29148 / DSM 2079 / JCM 5827 / CCUG 10774 / NCTC 10582 / VPI-5482 / E50).